The sequence spans 266 residues: Apolipoprotein A-I (266 aa).

Residues 1–18 (MKAVVLTLAVLFLTGSQA) form the signal peptide. A run of 2 repeats spans residues 67 to 88 (LKLLDNWDTLSSTVAKLREQIG) and 89 to 110 (PVTQEFWDNLEKETEVLRQEMN). The tract at residues 67–266 (LKLLDNWDTL…DEATKKLNAQ (200 aa)) is 10 X approximate tandem repeats. The residue at position 109 (Met-109) is a Methionine sulfoxide. Residues 111 to 121 (KDLEEVKKKVQ) form a 3; half-length repeat. 5 repeat units span residues 122 to 143 (PYLDEFQSKWHEEVELYRQKVA), 144 to 165 (PLGAELSEGARQKLQELQEKLS), 166 to 187 (PLGEELRDRARTHVDALRAQLA), 188 to 209 (PYSDQLRERLATRLQALKEGGG), and 210 to 231 (AALAEYHAKASEQLSVLREKAK). A 9; half-length repeat occupies 232-242 (PALEDLRQGLL). The stretch at 243-266 (PVLESFRTSLLAAVDEATKKLNAQ) is repeat 10.

Belongs to the apolipoprotein A1/A4/E family. As to quaternary structure, homodimer. Interacts with APOA1BP and CLU. Component of a sperm activating protein complex (SPAP), consisting of APOA1, an immunoglobulin heavy chain, an immunoglobulin light chain and albumin. Interacts with NDRG1. Interacts with SCGB3A2. Interacts with NAXE and YJEFN3. In terms of processing, glycosylated. Post-translationally, palmitoylated. Phosphorylation sites are present in the extracellular medium.

Its subcellular location is the secreted. Its function is as follows. Participates in the reverse transport of cholesterol from tissues to the liver for excretion by promoting cholesterol efflux from tissues and by acting as a cofactor for the lecithin cholesterol acyltransferase (LCAT). As part of the SPAP complex, activates spermatozoa motility. This chain is Apolipoprotein A-I (APOA1), found in Odobenus rosmarus divergens (Pacific walrus).